Consider the following 350-residue polypeptide: Putative [LysW]-lysine/[LysW]-ornithine hydrolase (350 aa).

Position 72 (H72) interacts with Zn(2+). D74 is a catalytic residue. Residue D96 coordinates Zn(2+). E128 functions as the Proton acceptor in the catalytic mechanism. Residues E129, E152, and H321 each coordinate Zn(2+).

The protein belongs to the peptidase M20A family. LysK subfamily. The cofactor is Zn(2+). It depends on Co(2+) as a cofactor.

The protein resides in the cytoplasm. The catalysed reaction is [amino-group carrier protein]-C-terminal-gamma-(L-lysyl)-L-glutamate + H2O = [amino-group carrier protein]-C-terminal-L-glutamate + L-lysine. It carries out the reaction [amino-group carrier protein]-C-terminal-gamma-(L-ornithyl)-L-glutamate + H2O = [amino-group carrier protein]-C-terminal-L-glutamate + L-ornithine. It functions in the pathway amino-acid biosynthesis; L-lysine biosynthesis via AAA pathway; L-lysine from L-alpha-aminoadipate (Thermus route): step 5/5. The protein operates within amino-acid biosynthesis; L-arginine biosynthesis. In terms of biological role, catalyzes the release of L-lysine from [LysW]-gamma-L-lysine and the release of L-ornithine from [LysW]-L-ornithine. This Aeropyrum pernix (strain ATCC 700893 / DSM 11879 / JCM 9820 / NBRC 100138 / K1) protein is Putative [LysW]-lysine/[LysW]-ornithine hydrolase.